The chain runs to 362 residues: Histidinol-phosphate aminotransferase (362 aa).

Lys-218 bears the N6-(pyridoxal phosphate)lysine mark.

It belongs to the class-II pyridoxal-phosphate-dependent aminotransferase family. Histidinol-phosphate aminotransferase subfamily. As to quaternary structure, homodimer. It depends on pyridoxal 5'-phosphate as a cofactor.

The enzyme catalyses L-histidinol phosphate + 2-oxoglutarate = 3-(imidazol-4-yl)-2-oxopropyl phosphate + L-glutamate. It functions in the pathway amino-acid biosynthesis; L-histidine biosynthesis; L-histidine from 5-phospho-alpha-D-ribose 1-diphosphate: step 7/9. This chain is Histidinol-phosphate aminotransferase, found in Xanthomonas campestris pv. campestris (strain B100).